A 58-amino-acid chain; its full sequence is Putative calcium channel toxin 196 (58 aa).

A signal peptide spans 1–16 (GSLLLVLFLLSVICYA). The propeptide occupies 17–26 (EIAAGPTKCQ). 3 disulfides stabilise this stretch: Cys-25–Cys-38, Cys-31–Cys-43, and Cys-37–Cys-52.

Belongs to the scorpion calcin-like family. KTX subfamily. In terms of tissue distribution, expressed by the venom gland.

It is found in the secreted. Its function is as follows. May inhibit voltage-gated potassium channels Kv1.1/KCNA1, hKv1.2/KCNA2, and Kv1.3/KCNA3. May also increase intracellular calcium release through the activation of nuclear inositol 1,4,5-trisphosphate receptors (ITPR) of cardiomyocytes, thereby causing an increase in the contraction frequency of these cells. This Lychas mucronatus (Chinese swimming scorpion) protein is Putative calcium channel toxin 196.